The chain runs to 310 residues: MKGQQKTAETEEGTVQIQEGAVATGEDPTSVAIASIQSAATFPDPNVKYVFRTENGGQVMYRVIQVSEGQLDGQTEGTGAISGYPATQSMTQAVIQGAFTSDDAVDTEGTAAETHYTYFPSTAVGDGAGGTTSGSTAAVVTTQGSEALLGQATPPGTGQFFVMMSPQEVLQGGSQRSIAPRTHPYSPKSEAPRTTRDEKRRAQHNEVERRRRDKINNWIVQLSKIIPDCSMESTKSGQSKGGILSKACDYIQELRQSNHRLSEELQGLDQLQLDNDVLRQQVEDLKNKNLLLRAQLRHHGLEVVIKNDSN.

The span at 1–17 shows a compositional bias: polar residues; it reads MKGQQKTAETEEGTVQI. Disordered stretches follow at residues 1-26 and 171-209; these read MKGQ…ATGE and QGGS…EVER. Positions 190–209 are enriched in basic and acidic residues; it reads EAPRTTRDEKRRAQHNEVER. Residues 199 to 254 enclose the bHLH domain; sequence KRRAQHNEVERRRRDKINNWIVQLSKIIPDCSMESTKSGQSKGGILSKACDYIQEL. The segment at 271 to 292 is leucine-zipper; the sequence is LQLDNDVLRQQVEDLKNKNLLL. K306 participates in a covalent cross-link: Glycyl lysine isopeptide (Lys-Gly) (interchain with G-Cter in SUMO2).

In terms of assembly, efficient DNA binding requires dimerization with another bHLH protein. Binds DNA as a homodimer or a heterodimer (USF1/USF2). Interacts with varicella-zoster virus IE62 protein.

The protein resides in the nucleus. In terms of biological role, transcription factor that binds to a symmetrical DNA sequence (E-boxes) (5'-CACGTG-3') that is found in a variety of viral and cellular promoters. The chain is Upstream stimulatory factor 1 (USF1) from Homo sapiens (Human).